Reading from the N-terminus, the 299-residue chain is Superkiller complex protein 8 (299 aa).

WD repeat units lie at residues 11-48 (AHED…FLTE), 54-93 (KHIL…LHKT), 96-135 (SGPL…KLRS), 138-177 (NTNK…RVSE), 180-219 (AHGV…PYIA), 223-263 (GHSS…LDSS), and 266-299 (AHAD…ALKQ).

This sequence belongs to the SKI8 family.

The chain is Superkiller complex protein 8 (skic8) from Dictyostelium discoideum (Social amoeba).